The sequence spans 209 residues: Redox-sensing transcriptional repressor Rex (209 aa).

Positions L16–F55 form a DNA-binding region, H-T-H motif. An NAD(+)-binding site is contributed by G90–G95.

Belongs to the transcriptional regulatory Rex family. In terms of assembly, homodimer.

It localises to the cytoplasm. Its function is as follows. Modulates transcription in response to changes in cellular NADH/NAD(+) redox state. The sequence is that of Redox-sensing transcriptional repressor Rex from Bacillus cereus (strain G9842).